A 217-amino-acid chain; its full sequence is Thiamine-phosphate synthase (217 aa).

4-amino-2-methyl-5-(diphosphooxymethyl)pyrimidine contacts are provided by residues 44-48 (QYREK) and Asn-76. Positions 77 and 96 each coordinate Mg(2+). Position 115 (Ser-115) interacts with 4-amino-2-methyl-5-(diphosphooxymethyl)pyrimidine. 141–143 (TKT) serves as a coordination point for 2-[(2R,5Z)-2-carboxy-4-methylthiazol-5(2H)-ylidene]ethyl phosphate. Residue Lys-144 coordinates 4-amino-2-methyl-5-(diphosphooxymethyl)pyrimidine. 2-[(2R,5Z)-2-carboxy-4-methylthiazol-5(2H)-ylidene]ethyl phosphate is bound by residues Gly-172 and 192 to 193 (VS).

Belongs to the thiamine-phosphate synthase family. It depends on Mg(2+) as a cofactor.

The enzyme catalyses 2-[(2R,5Z)-2-carboxy-4-methylthiazol-5(2H)-ylidene]ethyl phosphate + 4-amino-2-methyl-5-(diphosphooxymethyl)pyrimidine + 2 H(+) = thiamine phosphate + CO2 + diphosphate. The catalysed reaction is 2-(2-carboxy-4-methylthiazol-5-yl)ethyl phosphate + 4-amino-2-methyl-5-(diphosphooxymethyl)pyrimidine + 2 H(+) = thiamine phosphate + CO2 + diphosphate. It carries out the reaction 4-methyl-5-(2-phosphooxyethyl)-thiazole + 4-amino-2-methyl-5-(diphosphooxymethyl)pyrimidine + H(+) = thiamine phosphate + diphosphate. Its pathway is cofactor biosynthesis; thiamine diphosphate biosynthesis; thiamine phosphate from 4-amino-2-methyl-5-diphosphomethylpyrimidine and 4-methyl-5-(2-phosphoethyl)-thiazole: step 1/1. Condenses 4-methyl-5-(beta-hydroxyethyl)thiazole monophosphate (THZ-P) and 2-methyl-4-amino-5-hydroxymethyl pyrimidine pyrophosphate (HMP-PP) to form thiamine monophosphate (TMP). The polypeptide is Thiamine-phosphate synthase (Lawsonia intracellularis (strain PHE/MN1-00)).